A 100-amino-acid polypeptide reads, in one-letter code: MIETLTNFFITSALVLFGIAFIIGLFRLIKGPTTADRVVAFDASSAVIMCIIGIVSVIYNTVSFLDSIMLVAIISFVSSVSISRFIGGGRVFNGTNKRNH.

Helical transmembrane passes span 6–26 (TNFF…IGLF), 38–58 (VVAF…VSVI), and 62–82 (VSFL…SVSI).

Belongs to the CPA3 antiporters (TC 2.A.63) subunit F family. In terms of assembly, may form a heterooligomeric complex that consists of seven subunits: mnhA2, mnhB2, mnhC2, mnhD2, mnhE2, mnhF2 and mnhG2.

The protein resides in the cell membrane. The protein is Putative antiporter subunit mnhF2 (mnhF2) of Staphylococcus haemolyticus (strain JCSC1435).